The chain runs to 469 residues: NADH-quinone oxidoreductase subunit N (469 aa).

14 helical membrane passes run 9-29 (PLLM…LIAG), 40-60 (VGVM…VQMV), 76-96 (ATGV…AVAG), 105-125 (EAET…LAGA), 128-148 (LLLL…LVGL), 162-182 (YLMG…LYGL), 201-221 (VAVA…AGGV), 234-254 (ANAT…LVAL), 265-285 (LAWP…GNLA), 294-316 (RLLG…VAGA), 327-347 (YLGG…ALPG), 365-385 (AAAL…AVFI), 402-422 (LAVV…RWII), and 448-468 (VLAA…WQLV).

The protein belongs to the complex I subunit 2 family. As to quaternary structure, NDH-1 is composed of 14 different subunits. Subunits NuoA, H, J, K, L, M, N constitute the membrane sector of the complex.

Its subcellular location is the cell membrane. The catalysed reaction is a quinone + NADH + 5 H(+)(in) = a quinol + NAD(+) + 4 H(+)(out). NDH-1 shuttles electrons from NADH, via FMN and iron-sulfur (Fe-S) centers, to quinones in the respiratory chain. The immediate electron acceptor for the enzyme in this species is believed to be a menaquinone. Couples the redox reaction to proton translocation (for every two electrons transferred, four hydrogen ions are translocated across the cytoplasmic membrane), and thus conserves the redox energy in a proton gradient. The protein is NADH-quinone oxidoreductase subunit N of Mycobacterium sp. (strain JLS).